The primary structure comprises 701 residues: Elongation factor G (701 aa).

The region spanning 8–290 (SLYRNIGISA…AVIDYLPAPT (283 aa)) is the tr-type G domain. GTP is bound by residues 17–24 (AHIDAGKT), 88–92 (DTPGH), and 142–145 (NKMD).

It belongs to the TRAFAC class translation factor GTPase superfamily. Classic translation factor GTPase family. EF-G/EF-2 subfamily.

It localises to the cytoplasm. Catalyzes the GTP-dependent ribosomal translocation step during translation elongation. During this step, the ribosome changes from the pre-translocational (PRE) to the post-translocational (POST) state as the newly formed A-site-bound peptidyl-tRNA and P-site-bound deacylated tRNA move to the P and E sites, respectively. Catalyzes the coordinated movement of the two tRNA molecules, the mRNA and conformational changes in the ribosome. This Haemophilus ducreyi (strain 35000HP / ATCC 700724) protein is Elongation factor G.